The following is a 295-amino-acid chain: HTH-type transcriptional regulator TfdS (295 aa).

The region spanning 1–58 is the HTH lysR-type domain; the sequence is MEFRQLRYFVAAAEEGNVGAAARRLHISQPPVTRQIHALEQHLGVLLFERSARGVQLT. Positions 18–37 form a DNA-binding region, H-T-H motif; it reads VGAAARRLHISQPPVTRQIH.

The protein belongs to the LysR transcriptional regulatory family.

It is found in the cytoplasm. In terms of biological role, involved in the regulation of 3-chlorocatechol degradation. Transcriptional regulator of tfdB expression. Acts as a repressor in the absence of its effector (either 2-cis-chlorodiene lactone or chloromaleylacetate) but acts as an activator when its effector is present. This Cupriavidus pinatubonensis (strain JMP 134 / LMG 1197) (Cupriavidus necator (strain JMP 134)) protein is HTH-type transcriptional regulator TfdS (tfdS).